A 712-amino-acid chain; its full sequence is MHRTLLFLTWLISLTKAFNIKLPHTEKKDHLESNAVLACASYINTLKWSFDSSVVPGFYSTICSYSPAFDTWSLCIFNSLTDQIIPMDNTSFEESLGNVRKTCSFVDKKFSNISLEQYYSSLNNASSHALEDYGSIESLSTSIRVDRETRSRWIRAFHAHAYNLDISSVYGAYLTYYFVIVGIIAVFFHMSHYNGLNRALFASRFVNYIRGHFVLPTFLVDKHANHFKFLNVEVFTGLMPNSLEAWIIFGYTLANIIFLSISYIIDPYNLIFNSHLSQFTRLLADRSGILAFTQFPLIIIFTARNSFLEFLTGVKFNSFISFHKWIGRIMVLNATIHSLSYSLFAIINHAFKISNKQLYWKFGIASITVLCVLLVLSLGIVRKRHYEFFLYTHIILALLFFYCCWQHVKIFNGWKEWIVVSLLIWGLEKLFRIWNILQFRFPKATLINLNTSNNPHDEMFKVIIPKYNRRWHSKPGQYCFIYFLHPLVFWQCHPFTIIDEGEKCVLVIKPKSGLTRFIYNHILQSLNGKLQLRVAIEGPYGPSNLHLDKFDHLLLLSGGTGLPGPLDHAIKLSRNPDKPKSIDLIMAIKNPSFLNGYKSEILELKNSRSHVNVQVYLTQKTAVTKAANARDQLIHFDDIMTELTSFAHIGNARPNFSNVIENAIKSTPPGDSLAVVCCGPPVLVDDVRNTVSQKLLGYPERIIEYFEEYQCW.

A signal peptide spans 1-17 (MHRTLLFLTWLISLTKA). Residues 18–167 (FNIKLPHTEK…HAHAYNLDIS (150 aa)) are Vacuolar-facing. Residues Asn89, Asn112, and Asn124 are each glycosylated (N-linked (GlcNAc...) asparagine). Residues 168-188 (SVYGAYLTYYFVIVGIIAVFF) traverse the membrane as a helical segment. The Cytoplasmic portion of the chain corresponds to 189-244 (HMSHYNGLNRALFASRFVNYIRGHFVLPTFLVDKHANHFKFLNVEVFTGLMPNSLE). A helical membrane pass occupies residues 245–265 (AWIIFGYTLANIIFLSISYII). The Vacuolar portion of the chain corresponds to 266–287 (DPYNLIFNSHLSQFTRLLADRS). Positions 287 to 411 (SGILAFTQFP…YCCWQHVKIF (125 aa)) constitute a Ferric oxidoreductase domain. A helical membrane pass occupies residues 288-308 (GILAFTQFPLIIIFTARNSFL). At 309 to 328 (EFLTGVKFNSFISFHKWIGR) the chain is on the cytoplasmic side. Heme-binding residues include His323 and His337. The chain crosses the membrane as a helical span at residues 329–349 (IMVLNATIHSLSYSLFAIINH). At 350-360 (AFKISNKQLYW) the chain is on the vacuolar side. The chain crosses the membrane as a helical span at residues 361-381 (KFGIASITVLCVLLVLSLGIV). Topologically, residues 382–387 (RKRHYE) are cytoplasmic. The chain crosses the membrane as a helical span at residues 388-408 (FFLYTHIILALLFFYCCWQHV). Heme-binding residues include His393 and His407. The Vacuolar segment spans residues 409 to 416 (KIFNGWKE). Residues 412–546 (NGWKEWIVVS…EGPYGPSNLH (135 aa)) form the FAD-binding FR-type domain. A helical transmembrane segment spans residues 417–437 (WIVVSLLIWGLEKLFRIWNIL). Topologically, residues 438–712 (QFRFPKATLI…IEYFEEYQCW (275 aa)) are cytoplasmic. FAD is bound at residue 493-499 (HPFTIID). Residues 538–541 (GPYG) and 678–679 (CG) each bind NADP(+).

This sequence belongs to the ferric reductase (FRE) family. Requires FAD as cofactor.

The protein resides in the vacuole membrane. It catalyses the reaction 2 a Fe(II)-siderophore + NADP(+) + H(+) = 2 a Fe(III)-siderophore + NADPH. In terms of biological role, metalloreductase responsible for reducing vacuolar iron and copper prior to transport into the cytosol. Catalyzes the reduction of Fe(3+) to Fe(2+) and Cu(2+) to Cu(+), respectively, which can then be transported by the respective vacuolar efflux systems to the cytosol. This chain is Ferric reductase transmembrane component 6 (FRE6), found in Saccharomyces cerevisiae (strain ATCC 204508 / S288c) (Baker's yeast).